The chain runs to 264 residues: Energy-coupling factor transporter ATP-binding protein EcfA1 (264 aa).

The ABC transporter domain occupies 2–234; that stretch reads IQVENLSFSY…DEFNPFLIKI (233 aa). ATP is bound at residue 34–41; sequence GKNGSGKS.

The protein belongs to the ABC transporter superfamily. Energy-coupling factor EcfA family. Forms a stable energy-coupling factor (ECF) transporter complex composed of 2 membrane-embedded substrate-binding proteins (S component), 2 ATP-binding proteins (A component) and 2 transmembrane proteins (T component).

Its subcellular location is the cell inner membrane. Its function is as follows. ATP-binding (A) component of a common energy-coupling factor (ECF) ABC-transporter complex. Unlike classic ABC transporters this ECF transporter provides the energy necessary to transport a number of different substrates. The polypeptide is Energy-coupling factor transporter ATP-binding protein EcfA1 (Fusobacterium nucleatum subsp. nucleatum (strain ATCC 25586 / DSM 15643 / BCRC 10681 / CIP 101130 / JCM 8532 / KCTC 2640 / LMG 13131 / VPI 4355)).